The primary structure comprises 580 residues: Serine/threonine-protein kinase PINK1, mitochondrial (580 aa).

A mitochondrion-targeting transit peptide spans 1–77 (MAVRQALGRG…RFFRQSVAGL (77 aa)). The tract at residues 28–60 (VSGWGKPGPGAAWGRGERPGRVSSPGAQPRPLG) is disordered. The chain crosses the membrane as a helical span at residues 94–110 (GPCGRAVFLAFGLGLGL). The segment at 111-117 (IEEKQAE) is required for outer membrane localization. Positions 156-510 (YLIGQAIGKG…IAANVLHLSL (355 aa)) constitute a Protein kinase domain. ATP is bound by residues 162 to 170 (IGKGCNAAV) and K218. Position 227 is a phosphoserine; by autocatalysis (S227). Catalysis depends on D361, which acts as the Proton acceptor. S401 bears the Phosphoserine; by autocatalysis mark.

It belongs to the protein kinase superfamily. Ser/Thr protein kinase family. As to quaternary structure, upon mitochondrial depolarization, it forms a supercomplex with TOM and TIM23 complexes. PINK1-TOM-TIM23 supercomplex formation requires PINK1 interaction with TOMM20 and TOMM70 and is critical for PINK1 stabilization at the outer mitochondrial membrane, kinase activation and downstream mitophagy. Upon mitochondrial depolarization, interacts with TIMM23; the interaction is required for PINK1 accumulation at the outer mitochondrial membrane, kinase activation by autophosphorylation and PRKN recruitement to mitochondria. Interacts with PRKN. Interacts with FBXO7. Forms a complex with PRKN and PARK7. Interacts with NENF. Requires Mg(2+) as cofactor. Proteolytically cleaved. In healthy cells, the precursor is continuously imported into the inner mitochondrial membrane (IMM), where it is proteolytically cleaved by mitochondrial-processing peptidase (MPP) and then undergoes further proteolytic cleavage by PARL or AFG3L2 to give rise to the 52 kDa short form. The 52 kDa short form is then released into the cytosol where it rapidly undergoes proteasome-dependent degradation. In unhealthy cells, when cellular stress conditions lead to the loss of mitochondrial membrane potential, mitochondrial import is impaired leading to the precursor accumulating on the outer mitochondrial membrane (OMM). If accumulation at the OMM fails and it is imported into the depolarized mitochondria, it undergoes cleavage by the IMM protease OMA1, promoting its subsequent degradation by the proteasome. In terms of processing, autophosphorylated. Loss of mitochondrial membrane potential results in the precursor accumulating on the outer mitochondrial membrane (OMM) where it is activated by autophosphorylation. Autophosphorylation at Ser-227 and Ser-401 is sufficient and essential for selective recruitment of PRKN to depolarized mitochondria, via PINK1-dependent phosphorylation of ubiquitin and maybe PRKN.

It localises to the mitochondrion outer membrane. It is found in the mitochondrion inner membrane. The protein localises to the cytoplasm. Its subcellular location is the cytosol. The catalysed reaction is L-seryl-[protein] + ATP = O-phospho-L-seryl-[protein] + ADP + H(+). It carries out the reaction L-threonyl-[protein] + ATP = O-phospho-L-threonyl-[protein] + ADP + H(+). In terms of biological role, serine/threonine-protein kinase which acts as a sensor of mitochondrial damage and protects against mitochondrial dysfunction during cellular stress. It phosphorylates mitochondrial proteins to coordinate mitochondrial quality control mechanisms that remove and replace dysfunctional mitochondrial components. Depending on the severity of mitochondrial damage, activity ranges from preventing apoptosis and stimulating mitochondrial biogenesis to eliminating severely damaged mitochondria via PINK1-PRKN-dependent mitophagy. When cellular stress results in irreversible mitochondrial damage, PINK1 accumulates at the outer mitochondrial membrane (OMM) where it phosphorylates pre-existing polyubiquitin chains at 'Ser-65', recruits PRKN from the cytosol to the OMM and activates PRKN by phosphorylation at 'Ser-65'; activated PRKN then ubiquinates VDAC1 and other OMM proteins to initiate mitophagy. The PINK1-PRKN pathway also promotes fission of damaged mitochondria through phosphorylation and PRKN-dependent degradation of mitochondrial proteins involved in fission such as MFN2. This prevents the refusion of unhealthy mitochondria with the mitochondrial network or initiates mitochondrial fragmentation facilitating their later engulfment by autophagosomes. Also promotes mitochondrial fission independently of PRKN and ATG7-mediated mitophagy, via the phosphorylation and activation of DNM1L. Regulates motility of damaged mitochondria by promoting the ubiquitination and subsequent degradation of MIRO1 and MIRO2; in motor neurons, this likely inhibits mitochondrial intracellular anterograde transport along the axons which probably increases the chance of the mitochondria undergoing mitophagy in the soma. Required for ubiquinone reduction by mitochondrial complex I by mediating phosphorylation of complex I subunit NDUFA10. Phosphorylates LETM1, positively regulating its mitochondrial calcium transport activity. The protein is Serine/threonine-protein kinase PINK1, mitochondrial of Rattus norvegicus (Rat).